Reading from the N-terminus, the 343-residue chain is MKLKTKTMEWSGNSLKLLDQRKLPFIEEYVECKTHEEVAHAIKEMIVRGAPAIGVAAAFGYVLGLRDYKTGSLTDWMKQVKETLARTRPTAVNLFWALNRMEKVFFENADRENLFEILENEALKMAYEDIEVNKAIGKNGAQLIKDGSTILTHCNAGALATVDYGTALGVIRAAVESGKRIRVFADETRPYLQGARLTAWELMKDGIEVYVITDNMAGWLMKRGLIDAVVVGADRIALNGDTANKIGTYSLAVLAKRNNIPFYVAAPVSTIDPTIRSGEEIPIEERRPEEVTHCGGNRIAPEGVKVLNPAFDVTENTLITAIITEKGVIRPPFEENIKKILEV.

Substrate is bound by residues arginine 48 to alanine 50, arginine 88, and glutamine 193. The active-site Proton donor is the aspartate 234. Residue asparagine 244–lysine 245 coordinates substrate.

It belongs to the eIF-2B alpha/beta/delta subunits family. MtnA subfamily.

The enzyme catalyses 5-(methylsulfanyl)-alpha-D-ribose 1-phosphate = 5-(methylsulfanyl)-D-ribulose 1-phosphate. The protein operates within amino-acid biosynthesis; L-methionine biosynthesis via salvage pathway; L-methionine from S-methyl-5-thio-alpha-D-ribose 1-phosphate: step 1/6. In terms of biological role, catalyzes the interconversion of methylthioribose-1-phosphate (MTR-1-P) into methylthioribulose-1-phosphate (MTRu-1-P). In Thermotoga maritima (strain ATCC 43589 / DSM 3109 / JCM 10099 / NBRC 100826 / MSB8), this protein is Methylthioribose-1-phosphate isomerase.